The chain runs to 354 residues: MTPPTMLQTAPVESFNLNPKSTQQAINLKSDAKNGKVSFADWNEFKFAPIRESTVSRAMTRRYFADLDKFAESDIVIIGAGSAGLSAAYTLGKNRPDLKIAIIEASVSPGGGCWLGGQLFSAMVLRKPAHLFLDDMGLDYEDEGDYVVVKHAALFMSTLMSKVLQFPNIKLFNATAVEDLITRKDPATNLQRIAGVVVNWAQLDHDTQSCMDPNTINCNVVLSTSGHDGPFGAFTAKRLEQLGRAPRDVTAGFTKPSITTSKLQEPEPISNFQLGGMKGLDMNKAEDAIVKGTREVVPGLVIAGMELAEVDGSNRMRPTFGAMALSGVKAAESVLNVLELRKQQNEACYGAYKG.

Residues A83, 104–105 (EA), G112, and V177 each bind substrate. C210 carries the 2,3-didehydroalanine (Cys) modification. Substrate contacts are provided by residues D212, H227, M305, and 315–317 (RMR).

Belongs to the THI4 family. Homooctamer. Fe cation serves as cofactor. In terms of processing, during the catalytic reaction, a sulfide is transferred from Cys-210 to a reaction intermediate, generating a dehydroalanine residue.

It localises to the cytoplasm. Its subcellular location is the nucleus. It carries out the reaction [ADP-thiazole synthase]-L-cysteine + glycine + NAD(+) = [ADP-thiazole synthase]-dehydroalanine + ADP-5-ethyl-4-methylthiazole-2-carboxylate + nicotinamide + 3 H2O + 2 H(+). Functionally, involved in biosynthesis of the thiamine precursor thiazole. Catalyzes the conversion of NAD and glycine to adenosine diphosphate 5-(2-hydroxyethyl)-4-methylthiazole-2-carboxylic acid (ADT), an adenylated thiazole intermediate. The reaction includes an iron-dependent sulfide transfer from a conserved cysteine residue of the protein to a thiazole intermediate. The enzyme can only undergo a single turnover, which suggests it is a suicide enzyme. May have additional roles in adaptation to various stress conditions and in DNA damage tolerance. The polypeptide is Thiamine thiazole synthase (Candida albicans (strain WO-1) (Yeast)).